A 571-amino-acid chain; its full sequence is Proline--tRNA ligase (571 aa).

This sequence belongs to the class-II aminoacyl-tRNA synthetase family. ProS type 1 subfamily. Homodimer.

The protein resides in the cytoplasm. It catalyses the reaction tRNA(Pro) + L-proline + ATP = L-prolyl-tRNA(Pro) + AMP + diphosphate. Catalyzes the attachment of proline to tRNA(Pro) in a two-step reaction: proline is first activated by ATP to form Pro-AMP and then transferred to the acceptor end of tRNA(Pro). As ProRS can inadvertently accommodate and process non-cognate amino acids such as alanine and cysteine, to avoid such errors it has two additional distinct editing activities against alanine. One activity is designated as 'pretransfer' editing and involves the tRNA(Pro)-independent hydrolysis of activated Ala-AMP. The other activity is designated 'posttransfer' editing and involves deacylation of mischarged Ala-tRNA(Pro). The misacylated Cys-tRNA(Pro) is not edited by ProRS. The polypeptide is Proline--tRNA ligase (Vibrio vulnificus (strain CMCP6)).